We begin with the raw amino-acid sequence, 380 residues long: Chaperone protein DnaJ (380 aa).

The J domain occupies 5–69; sequence DLYKVLGVEK…QKRAQYDQFG (65 aa). Residues 140–222 form a CR-type zinc finger; it reads GKKTTITYNR…CGGSGHTEQS (83 aa). Zn(2+) contacts are provided by Cys153, Cys156, Cys170, Cys173, Cys196, Cys199, Cys210, and Cys213. CXXCXGXG motif repeat units lie at residues 153–160, 170–177, 196–203, and 210–217; these read CETCGGSG, CSKCHGAG, CDVCHGTG, and CATCGGSG.

The protein belongs to the DnaJ family. As to quaternary structure, homodimer. It depends on Zn(2+) as a cofactor.

The protein resides in the cytoplasm. Participates actively in the response to hyperosmotic and heat shock by preventing the aggregation of stress-denatured proteins and by disaggregating proteins, also in an autonomous, DnaK-independent fashion. Unfolded proteins bind initially to DnaJ; upon interaction with the DnaJ-bound protein, DnaK hydrolyzes its bound ATP, resulting in the formation of a stable complex. GrpE releases ADP from DnaK; ATP binding to DnaK triggers the release of the substrate protein, thus completing the reaction cycle. Several rounds of ATP-dependent interactions between DnaJ, DnaK and GrpE are required for fully efficient folding. Also involved, together with DnaK and GrpE, in the DNA replication of plasmids through activation of initiation proteins. The protein is Chaperone protein DnaJ of Lactiplantibacillus plantarum (strain ATCC BAA-793 / NCIMB 8826 / WCFS1) (Lactobacillus plantarum).